The chain runs to 962 residues: Glycine dehydrogenase (decarboxylating) (962 aa).

K710 is subject to N6-(pyridoxal phosphate)lysine.

This sequence belongs to the GcvP family. The glycine cleavage system is composed of four proteins: P, T, L and H. Requires pyridoxal 5'-phosphate as cofactor.

It catalyses the reaction N(6)-[(R)-lipoyl]-L-lysyl-[glycine-cleavage complex H protein] + glycine + H(+) = N(6)-[(R)-S(8)-aminomethyldihydrolipoyl]-L-lysyl-[glycine-cleavage complex H protein] + CO2. Functionally, the glycine cleavage system catalyzes the degradation of glycine. The P protein binds the alpha-amino group of glycine through its pyridoxal phosphate cofactor; CO(2) is released and the remaining methylamine moiety is then transferred to the lipoamide cofactor of the H protein. The chain is Glycine dehydrogenase (decarboxylating) from Idiomarina loihiensis (strain ATCC BAA-735 / DSM 15497 / L2-TR).